Consider the following 250-residue polypeptide: Ribosomal RNA small subunit methyltransferase J (250 aa).

S-adenosyl-L-methionine-binding positions include 101-102 (RD), 117-118 (ER), 153-154 (SS), and Asp-171.

This sequence belongs to the methyltransferase superfamily. RsmJ family.

It is found in the cytoplasm. It carries out the reaction guanosine(1516) in 16S rRNA + S-adenosyl-L-methionine = N(2)-methylguanosine(1516) in 16S rRNA + S-adenosyl-L-homocysteine + H(+). In terms of biological role, specifically methylates the guanosine in position 1516 of 16S rRNA. The polypeptide is Ribosomal RNA small subunit methyltransferase J (Escherichia coli (strain UTI89 / UPEC)).